The following is an 835-amino-acid chain: Translation initiation factor IF-2 (835 aa).

Residues methionine 1–alanine 240 form a disordered region. Residues alanine 50–alanine 59 are compositionally biased toward gly residues. Over residues lysine 86–alanine 152 the composition is skewed to basic and acidic residues. Low complexity predominate over residues aspartate 153 to alanine 169. Positions arginine 184–arginine 205 are enriched in basic and acidic residues. The region spanning proline 332–glutamate 500 is the tr-type G domain. A G1 region spans residues glycine 341–threonine 348. Residue glycine 341–threonine 348 coordinates GTP. The segment at glycine 366–histidine 370 is G2. The G3 stretch occupies residues aspartate 388 to glycine 391. Residues aspartate 388–histidine 392 and asparagine 442–aspartate 445 contribute to the GTP site. A G4 region spans residues asparagine 442–aspartate 445. The segment at serine 478–histidine 480 is G5.

Belongs to the TRAFAC class translation factor GTPase superfamily. Classic translation factor GTPase family. IF-2 subfamily.

It is found in the cytoplasm. One of the essential components for the initiation of protein synthesis. Protects formylmethionyl-tRNA from spontaneous hydrolysis and promotes its binding to the 30S ribosomal subunits. Also involved in the hydrolysis of GTP during the formation of the 70S ribosomal complex. The polypeptide is Translation initiation factor IF-2 (Ruegeria sp. (strain TM1040) (Silicibacter sp.)).